Here is a 351-residue protein sequence, read N- to C-terminus: Nuclear inhibitor of protein phosphatase 1 (351 aa).

Residues 1 to 142 (MAAAANSGSS…LPSAVKGDEK (142 aa)) are interaction with CDC5L, SF3B1 and MELK. The FHA domain occupies 49–101 (YLFGRNPDLCDFTIDHQSCSRVHAALVYHKHLKRVFLIDLNSTHGTFLGHIRL). The interval 143–224 (MGGEDDELKG…VDPSVGRFRN (82 aa)) is interaction with EED. Thr161 bears the Phosphothreonine mark. Phosphoserine occurs at positions 178 and 199. 2 consecutive short sequence motifs (nuclear localization signal) follow at residues 185-209 (GNLD…DDEI) and 210-240 (INPE…RVEG). An involved in PP-1 inhibition region spans residues 191-200 (RPKRKRKNSR). The involved in PP-1 binding stretch occupies residues 200–203 (RVTF). The residue at position 204 (Ser204) is a Phosphoserine. Residue Ser249 is modified to Phosphoserine. Residue Tyr264 is modified to Phosphotyrosine; by LYN; in vitro. Residues 310-329 (AVNMNPAPNPAVYNPEAVNE) form an interaction with EED region. A disordered region spans residues 316–351 (APNPAVYNPEAVNEPKKKKYAKEAWPGKKPTPSLLI). The RNA-binding stretch occupies residues 330-351 (PKKKKYAKEAWPGKKPTPSLLI). Residues 331–337 (KKKKYAK) form an involved in PP-1 inhibition region. Tyr335 is subject to Phosphotyrosine.

As to quaternary structure, interacts with phosphorylated CDC5L, SF3B1 and MELK. Interacts with EED, in a nucleic acid-stimulated manner. Part of a complex consisting of PPP1R8, EED, HDAC2 and PP-1. Part of the spliceosome. Interacts with PPP1CA, PPP1CB and PPP1CC. Mg(2+) serves as cofactor. Post-translationally, may be inactivated by phosphorylation on Ser-199 or Ser-204. Phosphorylated by Lyn in vitro on Tyr-264, and also on Tyr-335 in the presence of RNA. Ubiquitously expressed, with highest levels in heart and skeletal muscle, followed by brain, placenta, lung, liver and pancreas. Less abundant in kidney. The concentration and ratio between isoforms is cell-type dependent. Isoform Alpha (&gt;90%) and isoform Beta were found in brain, heart and kidney. Isoform Gamma is mainly found in B-cells and T-lymphocytes, and has been found in 293 embryonic kidney cells.

It is found in the nucleus. The protein localises to the nucleus speckle. It localises to the cytoplasm. Its function is as follows. Inhibitor subunit of the major nuclear protein phosphatase-1 (PP-1). It has RNA-binding activity but does not cleave RNA and may target PP-1 to RNA-associated substrates. May also be involved in pre-mRNA splicing. Binds DNA and might act as a transcriptional repressor. Seems to be required for cell proliferation. In terms of biological role, isoform Gamma is a site-specific single-strand endoribonuclease that cleaves single strand RNA 3' to purines and pyrimidines in A+U-rich regions. It generates 5'-phosphate termini at the site of cleavage. This isoform does not inhibit PP-1. May be implicated in mRNA splicing. This Homo sapiens (Human) protein is Nuclear inhibitor of protein phosphatase 1 (PPP1R8).